The following is a 331-amino-acid chain: Ketol-acid reductoisomerase (NADP(+)) (331 aa).

Positions 2–181 constitute a KARI N-terminal Rossmann domain; that stretch reads LEKYYDKDAD…GATRAVVFET (180 aa). Residues 25 to 28, Arg48, Ser52, and 82 to 85 contribute to the NADP(+) site; these read YGSQ and DEQQ. Residue His107 is part of the active site. Gly133 is an NADP(+) binding site. The region spanning 182–327 is the KARI C-terminal knotted domain; the sequence is SFREETETDL…KEIRATMPQF (146 aa). 4 residues coordinate Mg(2+): Asp190, Glu194, Glu226, and Glu230. Ser251 provides a ligand contact to substrate.

This sequence belongs to the ketol-acid reductoisomerase family. It depends on Mg(2+) as a cofactor.

The enzyme catalyses (2R)-2,3-dihydroxy-3-methylbutanoate + NADP(+) = (2S)-2-acetolactate + NADPH + H(+). The catalysed reaction is (2R,3R)-2,3-dihydroxy-3-methylpentanoate + NADP(+) = (S)-2-ethyl-2-hydroxy-3-oxobutanoate + NADPH + H(+). Its pathway is amino-acid biosynthesis; L-isoleucine biosynthesis; L-isoleucine from 2-oxobutanoate: step 2/4. It participates in amino-acid biosynthesis; L-valine biosynthesis; L-valine from pyruvate: step 2/4. Its function is as follows. Involved in the biosynthesis of branched-chain amino acids (BCAA). Catalyzes an alkyl-migration followed by a ketol-acid reduction of (S)-2-acetolactate (S2AL) to yield (R)-2,3-dihydroxy-isovalerate. In the isomerase reaction, S2AL is rearranged via a Mg-dependent methyl migration to produce 3-hydroxy-3-methyl-2-ketobutyrate (HMKB). In the reductase reaction, this 2-ketoacid undergoes a metal-dependent reduction by NADPH to yield (R)-2,3-dihydroxy-isovalerate. This Methanospirillum hungatei JF-1 (strain ATCC 27890 / DSM 864 / NBRC 100397 / JF-1) protein is Ketol-acid reductoisomerase (NADP(+)).